Consider the following 545-residue polypeptide: Labda-7,13-dienyl diphosphate synthase (545 aa).

The DXDDTA motif motif lies at aspartate 315 to alanine 320. An RXXDGSW motif motif is present at residues arginine 444–tryptophan 450. The segment at leucine 526–aspartate 545 is disordered.

Belongs to the terpene synthase family. The cofactor is Mg(2+).

The enzyme catalyses (2E,6E,10E)-geranylgeranyl diphosphate = (13E)-labda-7,13-dien-15-yl diphosphate. Its function is as follows. Involved in the biosynthesis of the labdane-type bicyclic diterpene labda-7,13(16),14-triene. Catalyzes the conversion of geranylgeranyl diphosphate (GGDP) into labda-7,13(E)-dienyl diphosphate. In Streptomyces clavuligerus, this protein is Labda-7,13-dienyl diphosphate synthase.